Here is a 146-residue protein sequence, read N- to C-terminus: Large ribosomal subunit protein bL21 (146 aa).

The interval 117-146 (ITIGKSAPKSSSKKETVKKETKPKSEKSTN) is disordered. The span at 128–146 (SKKETVKKETKPKSEKSTN) shows a compositional bias: basic and acidic residues.

Belongs to the bacterial ribosomal protein bL21 family. Part of the 50S ribosomal subunit. Contacts protein L20.

Its function is as follows. This protein binds to 23S rRNA in the presence of protein L20. This is Large ribosomal subunit protein bL21 from Prochlorococcus marinus (strain MIT 9301).